The primary structure comprises 137 residues: Large ribosomal subunit protein uL16 (137 aa).

Positions 1 to 13 (MLQPSRRKYRKEQ) are enriched in basic residues. Residues 1 to 22 (MLQPSRRKYRKEQKGRNTGLAT) are disordered.

It belongs to the universal ribosomal protein uL16 family. As to quaternary structure, part of the 50S ribosomal subunit.

Functionally, binds 23S rRNA and is also seen to make contacts with the A and possibly P site tRNAs. This is Large ribosomal subunit protein uL16 from Azoarcus sp. (strain BH72).